Consider the following 364-residue polypeptide: MAQQTPLYEQHTLCGARMVDFHGWMMPLHYGSQIDEHHAVRTDAGMFDVSHMTIVDLRGSRTREFLRYLLANDVAKLTKSGKALYSGMLNASGGVIDDLIVYYFTEDLFRLVVNSATREKDLSWITQHAEPFGIEITVRDDLSMIAVQGPNAQAKAATLFNDAQRQAVEGMKPFFGVQAGDLFIATTGYTGEAGYEIALPNEKAADFWRALVEAGVKPCGLGARDTLRLEAGMNLYGQEMDETISPLAANMGWTIAWEPADRDFIGREALEVQREHGTEKLVGLVMTEKGVLRNELPVRFTDAQGNQHEGIITSGTFSPTLGYSIALARVPEGIGETAIVQIRNREMPVKVTKPVFVRNGKAVA.

Belongs to the GcvT family. As to quaternary structure, the glycine cleavage system is composed of four proteins: P, T, L and H.

The enzyme catalyses N(6)-[(R)-S(8)-aminomethyldihydrolipoyl]-L-lysyl-[protein] + (6S)-5,6,7,8-tetrahydrofolate = N(6)-[(R)-dihydrolipoyl]-L-lysyl-[protein] + (6R)-5,10-methylene-5,6,7,8-tetrahydrofolate + NH4(+). In terms of biological role, the glycine cleavage system catalyzes the degradation of glycine. In Shigella boydii serotype 18 (strain CDC 3083-94 / BS512), this protein is Aminomethyltransferase.